The sequence spans 62 residues: Sperm protamine P1 (62 aa).

The interval 1 to 62 is disordered; it reads MARSRRHSRS…RCSRRRRRRC (62 aa).

It belongs to the protamine P1 family. As to expression, testis.

The protein localises to the nucleus. It is found in the chromosome. Its function is as follows. Protamines substitute for histones in the chromatin of sperm during the haploid phase of spermatogenesis. They compact sperm DNA into a highly condensed, stable and inactive complex. This is Sperm protamine P1 (PRM1) from Planigale ingrami (Long-tailed planigale).